A 568-amino-acid chain; its full sequence is MDQDAFILKEDSEVEREAPGGRESLSDVIGFLDAVLSSEPTDIGGDRSWLHNTINTPQGPGSAHRAKSEGEGEVSTPSTQDNRSGEESRVSGRTSKPEAEAHAGNLDKQNIHRAFGGRTGTNSVSQDLGDGGDSGILENPPNERGYPRSGIEDENREMAAHPDKRGEDQAEGLPEEVRGGTSLPDEGEGGASNNGRSMEPGSSHSARVTGVLVIPSPELEEAVLRRNKRRPTNSGSKPLTPATVPGTRSPPLNRYNSTGSPPGKPPSTQDEHINSGDTPAVRVKDRKPPIGTRSVSDCPANGRPIHPGLESDSTKKGIGENTSSMKEMATLLTSLGVIQSAQEFESSRDASYVFARRALKSANYAEMTFNVCGLILSAEKSSARKVDENKQLLKQIQESVESFRDIYKRFSEYQKEQNSLLMSNLSTLHIITDRGGKTDNTDSLTRSPSVFAKSKENKTKATRFDPSMETLEDMKYKPDLIREDEFRDEIRNPVYQERDTEPRASNASRLLPSKEKPTMHSLRLVIESSPLSRAEKAAYVKSLSKCKTDQEVKAVMELVEEDIESLTN.

2 disordered regions span residues 1–23 and 38–320; these read MDQD…GGRE and SEPT…GIGE. Basic and acidic residues predominate over residues 7-20; it reads ILKEDSEVEREAPG. The tract at residues 33-41 is N0 binding; it reads DAVLSSEPT. Residues 50-59 are compositionally biased toward polar residues; sequence LHNTINTPQG. Residue Ser68 is modified to Phosphoserine; by host. The segment covering 83-101 has biased composition (basic and acidic residues); it reads RSGEESRVSGRTSKPEAEA. Phosphoserine; by host is present on Ser125. Residues 150–168 are compositionally biased toward basic and acidic residues; the sequence is GIEDENREMAAHPDKRGED. The segment covering 191 to 206 has biased composition (polar residues); it reads ASNNGRSMEPGSSHSA. 4 positions are modified to phosphoserine; by host: Ser192, Ser249, Ser257, and Ser260. Positions 344–411 are multimerization; the sequence is FESSRDASYV…SFRDIYKRFS (68 aa). Residues 364–429 are a coiled coil; it reads YAEMTFNVCG…LLMSNLSTLH (66 aa). The l protein binding stretch occupies residues 412–445; sequence EYQKEQNSLLMSNLSTLHIITDRGGKTDNTDSLT. Phosphoserine; by host occurs at positions 447 and 449. Residues 479–568 are interaction with the nucleocapsid (N-RNA); the sequence is DLIREDEFRD…VEEDIESLTN (90 aa). The interval 496-516 is disordered; it reads QERDTEPRASNASRLLPSKEK. Residues 547 to 566 form a formation of N-RNA complex involved in transcription and replication region; sequence KTDQEVKAVMELVEEDIESL.

This sequence belongs to the respirovirus P protein family. Homotetramer. Interacts (via multimerization domain) with polymerase L; this interaction forms the polymerase complex. Interacts (via N-terminus) with N0; this interaction allows P to chaperon N0 before encapsidation and form the N-P complex. Interacts (via C-terminus) with N-RNA template; this interaction positions the polymerase on the template. In terms of processing, phosphorylated by PKC/PRKCZ, and other unknown kinases. Phosphorylation is necessary for viral transcription and replication. The N-terminus contains the majority of phosphorylated sites. Ser-249 is the major site of phosphorylation, but is not necessary for most functions.

It localises to the host cytoplasm. Essential cofactor of the RNA polymerase L that plays a central role in the transcription and replication by forming the polymerase complex with RNA polymerase L and recruiting L to the genomic N-RNA template for RNA synthesis. Also plays a central role in the encapsidation of nascent RNA chains by forming the encapsidation complex with the nucleocapsid protein N (N-P complex). Acts as a chaperone for newly synthesized free N protein, so-called N0, allowing encapsidation of nascent RNA chains during replication. The nucleoprotein protein N prevents excessive phosphorylation of P, which leads to down-regulation of viral transcription/ replication. Participates, together with N, in the formation of viral factories (viroplasms), which are large inclusions in the host cytoplasm where replication takes place. Recruits host PI4KB and remodel the host endoplasmic reticulum membrane to form viral replication factories. The polypeptide is Phosphoprotein (P/V/C) (Cavia cutleri (Guinea pig)).